A 149-amino-acid polypeptide reads, in one-letter code: Large ribosomal subunit protein uL15 (149 aa).

The interval 14–57 is disordered; it reads KQRKRVGRGSGSGWGCTSGKGNKGQNARSGGGVRPGFEGGQMPL. Gly residues-rich tracts occupy residues 21–35 and 42–52; these read RGSG…GKGN and SGGGVRPGFEG.

Belongs to the universal ribosomal protein uL15 family. As to quaternary structure, part of the 50S ribosomal subunit.

Binds to the 23S rRNA. The polypeptide is Large ribosomal subunit protein uL15 (Oleidesulfovibrio alaskensis (strain ATCC BAA-1058 / DSM 17464 / G20) (Desulfovibrio alaskensis)).